The chain runs to 442 residues: Proline--tRNA ligase (442 aa).

It belongs to the class-II aminoacyl-tRNA synthetase family. ProS type 2 subfamily. Homodimer.

It is found in the cytoplasm. The catalysed reaction is tRNA(Pro) + L-proline + ATP = L-prolyl-tRNA(Pro) + AMP + diphosphate. In terms of biological role, catalyzes the attachment of proline to tRNA(Pro) in a two-step reaction: proline is first activated by ATP to form Pro-AMP and then transferred to the acceptor end of tRNA(Pro). This Brucella canis (strain ATCC 23365 / NCTC 10854 / RM-666) protein is Proline--tRNA ligase.